A 405-amino-acid chain; its full sequence is Aminodeoxyfutalosine deaminase (405 aa).

2 residues coordinate a divalent metal cation: histidine 61 and histidine 63. 3 residues coordinate substrate: glutamate 141, serine 145, and histidine 179. Histidine 206 lines the a divalent metal cation pocket. The Proton donor role is filled by glutamate 209. A divalent metal cation is bound at residue aspartate 306.

It belongs to the metallo-dependent hydrolases superfamily. A divalent metal cation serves as cofactor.

It carries out the reaction 6-amino-6-deoxyfutalosine + H2O + H(+) = futalosine + NH4(+). It participates in quinol/quinone metabolism; menaquinone biosynthesis. Its function is as follows. Catalyzes the deamination of aminodeoxyfutalosine (AFL) into futalosine (FL), a step in the biosynthesis of menaquinone (MK, vitamin K2). To a lesser extent, can also deaminate 5'-methylthioadenosine. This chain is Aminodeoxyfutalosine deaminase, found in Nitratiruptor sp. (strain SB155-2).